The following is a 201-amino-acid chain: Translation initiation factor IF-3 (201 aa).

It belongs to the IF-3 family. As to quaternary structure, monomer.

The protein localises to the cytoplasm. IF-3 binds to the 30S ribosomal subunit and shifts the equilibrium between 70S ribosomes and their 50S and 30S subunits in favor of the free subunits, thus enhancing the availability of 30S subunits on which protein synthesis initiation begins. The sequence is that of Translation initiation factor IF-3 from Mycoplasma pneumoniae (strain ATCC 29342 / M129 / Subtype 1) (Mycoplasmoides pneumoniae).